We begin with the raw amino-acid sequence, 103 residues long: Large ribosomal subunit protein uL24 (103 aa).

Belongs to the universal ribosomal protein uL24 family. In terms of assembly, part of the 50S ribosomal subunit.

In terms of biological role, one of two assembly initiator proteins, it binds directly to the 5'-end of the 23S rRNA, where it nucleates assembly of the 50S subunit. One of the proteins that surrounds the polypeptide exit tunnel on the outside of the subunit. This Bacillus mycoides (strain KBAB4) (Bacillus weihenstephanensis) protein is Large ribosomal subunit protein uL24.